Reading from the N-terminus, the 281-residue chain is Leukocyte antigen CD37 (281 aa).

Over 1–17 (MSAQESCLSLIKYFLFV) the chain is Cytoplasmic. The chain crosses the membrane as a helical span at residues 18–38 (FNLFFFVLGSLIFCFGIWILI). Residues 39 to 59 (DKTSFVSFVGLAFVPLQIWSK) lie on the Extracellular side of the membrane. A helical membrane pass occupies residues 60–74 (VLAISGIFTMGIALL). Residues 75–85 (GCVGALKELRC) are Cytoplasmic-facing. Residues 86–111 (LLGLYFGMLLLLFATQITLGILISTQ) traverse the membrane as a helical segment. Topologically, residues 112–241 (RAQLERSLRD…QGLQKWLHNN (130 aa)) are extracellular. N-linked (GlcNAc...) asparagine glycosylation is found at N170, N183, and N188. The helical transmembrane segment at 242-266 (LISIVGICLGVGLLELGFMTLSIFL) threads the bilayer. The Cytoplasmic portion of the chain corresponds to 267–281 (CRNLDHVYNRLARYR).

Belongs to the tetraspanin (TM4SF) family. As to quaternary structure, interacts with SCIMP. Interacts with SOCS3. Interacts with DECTIN1/CLEC7A. In terms of processing, tyrosine phosphorylated; leading to activation of downstream signaling pathways. In terms of tissue distribution, B-lymphocytes. Antigen presenting cells.

It localises to the cell membrane. Functionally, structural component of specialized membrane microdomains known as tetraspanin-enriched microdomains (TERMs), which act as platforms for receptor clustering and signaling. Participates thereby in diverse biological functions such as cell signal transduction, adhesion, migration and protein trafficking. Upon ligand binding, two signaling pathways are activated, one acting through phosphorylation by LYN leading to cell death or a survival pathway with activation of GSK3B. Plays an essential role essential for clustering of integrin ITGA4/ITGB1 and promotes its mobility in the plasma membrane of B-cells. In turn, participates in ITGA4/ITGB1 integrin-mediated antiapoptotic signaling through AKT. Also plays a role in the migration of dendritic cells and neutrophils to draining lymph nodes, as well as in their integrin-mediated adhesion. Negatively regulates IL-6 responses through direct interaction with SOCS3 thereby preventing constitutive IL-6 signaling. Alternatively, inhibition of IL-6 signaling can also occur via interaction and stabilization of DECTIN1/CLEC7A at the cell membrane to inhibit its ability to promote the production of IL-6. The chain is Leukocyte antigen CD37 (CD37) from Homo sapiens (Human).